Here is an 88-residue protein sequence, read N- to C-terminus: Cell division topological specificity factor (88 aa).

The protein belongs to the MinE family.

In terms of biological role, prevents the cell division inhibition by proteins MinC and MinD at internal division sites while permitting inhibition at polar sites. This ensures cell division at the proper site by restricting the formation of a division septum at the midpoint of the long axis of the cell. The chain is Cell division topological specificity factor from Escherichia fergusonii (strain ATCC 35469 / DSM 13698 / CCUG 18766 / IAM 14443 / JCM 21226 / LMG 7866 / NBRC 102419 / NCTC 12128 / CDC 0568-73).